We begin with the raw amino-acid sequence, 459 residues long: MSNYAIILAAGKGTRMKSDLPKVMHKVSGITMLEHVFRSVQAIEPSKIVTVIGHKAELVRDVLGDKSEFVMQTEQLGTGHAVMMAEEELATSKGHTLVIAGDTPLITGESLKNLIGFHVNHKNVATILTADAANPFGYGRIIRNSDDEVTKIVEQKDANDFEQQVKEINTGTYVFDNQSLFEALKDINTNNAQGEYYLTDVIGIFKEAGKKVGAYKLRDFDESLGVNDRVALATAEKVMRHRIARQHMVNGVTVVNPDSAYIDIDVEIGEESVIEPNVTLKGQTKIGKGTLLTNGSYLVDAQVGNDVTITNSMVEESIISDGVTVGPYAHIRPGTSLAKGVHIGNFVEVKGSQIGENTKAGHLTYIGNAEVGCDVNFGAGTITVNYDGQNKFKTEIGSNVFIGSNSTLIAPLEIGDNALTAAGSTITDNVPIDSIAIGRGRQVNKEGYANKKPHHPSQK.

Residues 1–229 (MSNYAIILAA…FDESLGVNDR (229 aa)) form a pyrophosphorylase region. UDP-N-acetyl-alpha-D-glucosamine contacts are provided by residues 8 to 11 (LAAG), Lys-22, Gln-72, and 77 to 78 (GT). Residue Asp-102 participates in Mg(2+) binding. Positions 139, 154, 169, and 227 each coordinate UDP-N-acetyl-alpha-D-glucosamine. Residue Asn-227 coordinates Mg(2+). Residues 230-250 (VALATAEKVMRHRIARQHMVN) form a linker region. Residues 251 to 459 (GVTVVNPDSA…NKKPHHPSQK (209 aa)) are N-acetyltransferase. Positions 332 and 350 each coordinate UDP-N-acetyl-alpha-D-glucosamine. His-362 acts as the Proton acceptor in catalysis. Residues Tyr-365 and Asn-376 each coordinate UDP-N-acetyl-alpha-D-glucosamine. Residues Ala-379, 385–386 (NY), Ser-404, Ala-422, and Arg-439 contribute to the acetyl-CoA site.

It in the N-terminal section; belongs to the N-acetylglucosamine-1-phosphate uridyltransferase family. The protein in the C-terminal section; belongs to the transferase hexapeptide repeat family. As to quaternary structure, homotrimer. Mg(2+) is required as a cofactor.

The protein resides in the cytoplasm. It carries out the reaction alpha-D-glucosamine 1-phosphate + acetyl-CoA = N-acetyl-alpha-D-glucosamine 1-phosphate + CoA + H(+). The catalysed reaction is N-acetyl-alpha-D-glucosamine 1-phosphate + UTP + H(+) = UDP-N-acetyl-alpha-D-glucosamine + diphosphate. The protein operates within nucleotide-sugar biosynthesis; UDP-N-acetyl-alpha-D-glucosamine biosynthesis; N-acetyl-alpha-D-glucosamine 1-phosphate from alpha-D-glucosamine 6-phosphate (route II): step 2/2. It participates in nucleotide-sugar biosynthesis; UDP-N-acetyl-alpha-D-glucosamine biosynthesis; UDP-N-acetyl-alpha-D-glucosamine from N-acetyl-alpha-D-glucosamine 1-phosphate: step 1/1. It functions in the pathway bacterial outer membrane biogenesis; LPS lipid A biosynthesis. Catalyzes the last two sequential reactions in the de novo biosynthetic pathway for UDP-N-acetylglucosamine (UDP-GlcNAc). The C-terminal domain catalyzes the transfer of acetyl group from acetyl coenzyme A to glucosamine-1-phosphate (GlcN-1-P) to produce N-acetylglucosamine-1-phosphate (GlcNAc-1-P), which is converted into UDP-GlcNAc by the transfer of uridine 5-monophosphate (from uridine 5-triphosphate), a reaction catalyzed by the N-terminal domain. The polypeptide is Bifunctional protein GlmU (Streptococcus agalactiae serotype III (strain NEM316)).